Reading from the N-terminus, the 647-residue chain is LIM domain kinase 1 (647 aa).

LIM zinc-binding domains are found at residues 25 to 75 and 84 to 137; these read CASC…CKKD and CHGC…CGQC. Residues 165-258 form the PDZ domain; that stretch reads LVSIPASAHG…LLQLTLEHDP (94 aa). The residue at position 210 (S210) is a Phosphoserine. T229 carries the phosphothreonine modification. The tract at residues 256–319 is disordered; sequence HDPHDSLGHG…SPASQRKDLG (64 aa). The span at 266–277 shows a compositional bias: low complexity; that stretch reads PVSDPSPLSSPV. Polar residues-rich tracts occupy residues 278-289 and 298-313; these read HTPSGQAASSAR and SIDT…SPAS. 4 positions are modified to phosphoserine: S298, S302, S307, and S310. Residue S323 is modified to Phosphoserine; by MAPKAPK2. S337 carries the phosphoserine modification. The region spanning 339–604 is the Protein kinase domain; it reads LIHGEVLGKG…PSFVKLEQWL (266 aa). Residues 345 to 353 and K368 each bind ATP; that span reads LGKGCFGQA. Residue D460 is part of the active site. The residue at position 508 (T508) is a Phosphothreonine; by ROCK1.

This sequence belongs to the protein kinase superfamily. TKL Ser/Thr protein kinase family. As to quaternary structure, self-associates to form homodimers. Interacts with HSP90AA1; this interaction promotes LIMK1 dimerization and subsequent transphosphorylation. Interacts with CDKN1C. Interacts (via LIM domain) with the cytoplasmic domain of NRG1. Interacts with NISCH. Interacts with SSH1. Interacts with RLIM and RNF6. Interacts (via LIM zinc-binding domains) with FAM89B/LRAP25 (via LRR repeat). Forms a tripartite complex with CDC42BPA, CDC42BPB and FAM89B/LRAP25. Autophosphorylated. Phosphorylated on Thr-508 by ROCK1 and PAK1, resulting in activation. Phosphorylated by PAK4 which increases the ability of LIMK1 to phosphorylate cofilin. Phosphorylated at Ser-323 by MAPKAPK2 during activation of VEGFA-induced signaling, which results in activation of LIMK1 and promotion of actin reorganization, cell migration, and tubule formation of endothelial cells. Dephosphorylated and inactivated by SSH1. Phosphorylated by CDC42BP. Post-translationally, ubiquitinated. 'Lys-48'-linked polyubiquitination by RNF6 leads to proteasomal degradation through the 26S proteasome, modulating LIMK1 levels in the growth cone and its effect on axonal outgrowth. Also polyubiquitinated by RLIM. In terms of tissue distribution, highest expression in the nervous system, particularly in the spinal cord and the cranial nerve and dorsal root ganglia.

The protein resides in the cytoplasm. It localises to the nucleus. Its subcellular location is the cytoskeleton. The protein localises to the cell projection. It is found in the lamellipodium. The catalysed reaction is L-seryl-[protein] + ATP = O-phospho-L-seryl-[protein] + ADP + H(+). It carries out the reaction L-threonyl-[protein] + ATP = O-phospho-L-threonyl-[protein] + ADP + H(+). Serine/threonine-protein kinase that plays an essential role in the regulation of actin filament dynamics. Acts downstream of several Rho family GTPase signal transduction pathways. Activated by upstream kinases including ROCK1, PAK1 and PAK4, which phosphorylate LIMK1 on a threonine residue located in its activation loop. LIMK1 subsequently phosphorylates and inactivates the actin binding/depolymerizing factors cofilin-1/CFL1, cofilin-2/CFL2 and destrin/DSTN, thereby preventing the cleavage of filamentous actin (F-actin), and stabilizing the actin cytoskeleton. In this way LIMK1 regulates several actin-dependent biological processes including cell motility, cell cycle progression, and differentiation. Phosphorylates TPPP on serine residues, thereby promoting microtubule disassembly. Stimulates axonal outgrowth and may be involved in brain development. This chain is LIM domain kinase 1 (Limk1), found in Mus musculus (Mouse).